The chain runs to 493 residues: Glycylpeptide N-tetradecanoyltransferase (493 aa).

Position 45–48 (45–48 (HKFW)) interacts with tetradecanoyl-CoA. The disordered stretch occupies residues 53 to 73 (VPQITGSGAPAPIEEGPIDDP). Tetradecanoyl-CoA is bound by residues 182 to 184 (LCV) and 190 to 194 (SKRLA). Residue leucine 493 is the Proton acceptor; via carboxylate of the active site.

The protein belongs to the NMT family. Monomer.

Its subcellular location is the cytoplasm. It catalyses the reaction N-terminal glycyl-[protein] + tetradecanoyl-CoA = N-tetradecanoylglycyl-[protein] + CoA + H(+). Adds a myristoyl group to the N-terminal glycine residue of certain cellular proteins. The protein is Glycylpeptide N-tetradecanoyltransferase of Cryptococcus neoformans var. neoformans serotype D (strain B-3501A) (Filobasidiella neoformans).